We begin with the raw amino-acid sequence, 640 residues long: Protein UL35 (640 aa).

Disordered stretches follow at residues 353–373 (ERGE…PREA), 500–571 (ASSS…PRQR), and 586–640 (AYSH…LRHL). Acidic residues predominate over residues 358-367 (GDEDEEQEND). Residues 500–562 (ASSSSASSSS…LSGSHGISSA (63 aa)) are compositionally biased toward low complexity. Residues 588-598 (SHHRRHRRRRS) show a composition bias toward basic residues. Residues 631-640 (DDLAENLRHL) are compositionally biased toward basic and acidic residues.

This sequence belongs to the herpesviridae pp85 family. Interacts with UL82. Interacts with isoform UL35A. Interacts with host UBP7; this interaction significantly inhibits the ability of USP7 to form nuclear bodies. Interacts with host DCAF1 (via C-terminus). Interacts with host SNX5; this interaction allows proper gB localization during viral assembly. Interacts with host TBK1; this interaction prevents type I interferon production. In terms of assembly, interacts with UL82. Interacts with isoform UL35. Interacts with host UBP7; this interaction significantly inhibits the ability of USP7 to form nuclear bodies. Interacts with host SNX5; this interaction allows proper gB localization during viral assembly.

The protein localises to the virion tegument. It localises to the host nucleus. It is found in the host cytoplasm. Plays important role in immediate-early gene expression through interaction with UL82. Forms nuclear bodies in host nucleus, independently of PML. In turn, UL35 nuclear bodies associate with and remodel PML bodies. Through interaction with host DCAF1, causes cells to accumulate in the G2 phase of the cell cycle by inducing a DNA damage response. Regulates viral assembly by controlling the localization of the essential gB through regulation of a retrograde transport pathway. This modulation occurs via binding and inhibition of host sorting nexin 5/SNX5. Also plays a role in the inhibition of pattern recognition receptor-mediated type I interferon signaling at the level of TBK1. Its function is as follows. Promotes cytoplasmic UL82 accumulation and inhibits UL35-containing nuclear bodies formation. Regulates viral assembly by controlling the localization of the essential gB through regulation of a retrograde transport pathway. This modulation occurs via binding and inhibition of host sorting nexin 5/SNX5. This chain is Protein UL35 (UL35), found in Homo sapiens (Human).